A 234-amino-acid chain; its full sequence is Proteasome subunit alpha type-6 (234 aa).

A Phosphoserine modification is found at S14. Residue K191 forms a Glycyl lysine isopeptide (Lys-Gly) (interchain with G-Cter in ubiquitin) linkage.

The protein belongs to the peptidase T1A family. The 26S proteasome consists of a 20S proteasome core and two 19S regulatory subunits. The 20S proteasome core is composed of 28 subunits that are arranged in four stacked rings, resulting in a barrel-shaped structure. The two end rings are each formed by seven alpha subunits, and the two central rings are each formed by seven beta subunits. The catalytic chamber with the active sites is on the inside of the barrel.

The protein localises to the cytoplasm. The protein resides in the nucleus. In terms of biological role, the proteasome degrades poly-ubiquitinated proteins in the cytoplasm and in the nucleus. It is essential for the regulated turnover of proteins and for the removal of misfolded proteins. The proteasome is a multicatalytic proteinase complex that is characterized by its ability to cleave peptides with Arg, Phe, Tyr, Leu, and Glu adjacent to the leaving group at neutral or slightly basic pH. It has an ATP-dependent proteolytic activity. The protein is Proteasome subunit alpha type-6 (PRE5) of Saccharomyces cerevisiae (strain ATCC 204508 / S288c) (Baker's yeast).